The sequence spans 243 residues: UPF0246 protein SpyM3_1790 (243 aa).

It belongs to the UPF0246 family.

The polypeptide is UPF0246 protein SpyM3_1790 (Streptococcus pyogenes serotype M3 (strain ATCC BAA-595 / MGAS315)).